A 429-amino-acid chain; its full sequence is Cytochrome c biogenesis protein CcsB (429 aa).

3 helical membrane passes run 14–34, 72–92, and 162–182; these read LKVAIVLLILIALGSALGTAL, SFWFLFLLTWLSFSLIICSWK, and VGPPLVHFGLILLIIGATYGV.

Belongs to the Ccs1/CcsB family. May interact with CcsA.

Its subcellular location is the cellular thylakoid membrane. Its function is as follows. Required during biogenesis of c-type cytochromes (cytochrome c6 and cytochrome f) at the step of heme attachment. This is Cytochrome c biogenesis protein CcsB from Prochlorococcus marinus (strain SARG / CCMP1375 / SS120).